The sequence spans 475 residues: Nitrogenase vanadium-iron protein beta chain (475 aa).

The [8Fe-7S] cluster site is built by Cys-31, Cys-56, Cys-115, and Ser-153.

The protein belongs to the NifD/NifK/NifE/NifN family. As to quaternary structure, hexamer of two alpha, two beta, and two delta chains. It depends on [8Fe-7S] cluster as a cofactor.

It catalyses the reaction N2 + 8 reduced [2Fe-2S]-[ferredoxin] + 16 ATP + 16 H2O = H2 + 8 oxidized [2Fe-2S]-[ferredoxin] + 2 NH4(+) + 16 ADP + 16 phosphate + 6 H(+). This vanadium-iron protein is part of the nitrogenase complex that catalyzes the key enzymatic reactions in nitrogen fixation. The chain is Nitrogenase vanadium-iron protein beta chain (vnfK) from Azotobacter vinelandii.